The chain runs to 727 residues: MAFQKAVKGTILVGGGALATVLGLSQFAHYRRKQMNLAYVKAADYISEPVNREPPSREAQLLTLQNTSEFDILVIGGGATGSGCALDAVTRGLKTALVERDDFSSGTSSRSTKLIHGGVRYLQKAIMKLDIEQYRMVKEALHERANLLEIAPHLSAPLPIVLPVYKWWQLPYYWVGIKLYDLVAGSNCLKSSYVLSKSRALEHFPMLQKDKLVGAIVYYDGQHNDARMNLAIALTAARYGAATANYMEVVSLLKKTDPQTGKVRVSGARCKDVLTGQEFDVRAKCVINATGPFTDSVRKMDDKDAAAICQPSAGVHIVMPGYYSPESMGLLDPATSDGRVIFFLPWQKMTIAGTTDTPTDVTPHPIPSEEDINFILNEVRNYLSCDVEVRRGDVLAAWSGIRPLVTDPKSADTQSISRNHVVDISESGLITIAGGKWTTYRSMAEDTINAAIKTHNLKAGPSRTVGLFLQGGKDWSPTLYIRLVQDYGLESEVAQHLAATYGDKAFEVAKMASVTGKRWPIVGVRLVSEFPYIEAEVKYGIKEYACTAVDMISRRTRLAFLNVQAAEEALPRIVELMGRELNWDDHKKQEQLETAKKFLYYEMGYKSRSEQLTDRSEISLLPSDIDRYKKRFHKFDADKKGFITIVDVQRVLESINVQMDENTLHEILNEVDLNKNGQVELNEFLQLMSAIQKGRVSGSRLAILMKTAEENLDRRVPIPVDRSCGGL.

A mitochondrion-targeting transit peptide spans 1 to 42; the sequence is MAFQKAVKGTILVGGGALATVLGLSQFAHYRRKQMNLAYVKA. 71-99 is an FAD binding site; the sequence is DILVIGGGATGSGCALDAVTRGLKTALVE. Tyrosine 601 carries the post-translational modification Phosphotyrosine. 2 EF-hand domains span residues 623 to 658 and 659 to 694; these read SDID…INVQ and MDEN…IQKG. Ca(2+) contacts are provided by aspartate 672, asparagine 674, asparagine 676, glutamine 678, and glutamate 683.

This sequence belongs to the FAD-dependent glycerol-3-phosphate dehydrogenase family. The cofactor is FAD.

It is found in the mitochondrion. The catalysed reaction is a quinone + sn-glycerol 3-phosphate = dihydroxyacetone phosphate + a quinol. The protein operates within polyol metabolism; glycerol degradation via glycerol kinase pathway; glycerone phosphate from sn-glycerol 3-phosphate (aerobic route): step 1/1. With respect to regulation, calcium-binding enhance the activity of the enzyme. Its function is as follows. Calcium-responsive mitochondrial glycerol-3-phosphate dehydrogenase which seems to be a key component of the pancreatic beta-cell glucose-sensing device. In Macaca fascicularis (Crab-eating macaque), this protein is Glycerol-3-phosphate dehydrogenase, mitochondrial (GPD2).